The following is a 90-amino-acid chain: Probable dynein light chain 2, cytoplasmic (90 aa).

The protein belongs to the dynein light chain family.

The protein localises to the cytoplasm. The protein resides in the cytoskeleton. Its function is as follows. Acts as one of several non-catalytic accessory components of a dynein complex. The protein is Probable dynein light chain 2, cytoplasmic (dlc-2) of Caenorhabditis elegans.